Reading from the N-terminus, the 123-residue chain is Small ribosomal subunit protein uS12 (123 aa).

The tract at residues M1 to P22 is disordered. D89 is modified (3-methylthioaspartic acid). The interval G100–K123 is disordered. The segment covering N111 to K123 has biased composition (basic residues).

The protein belongs to the universal ribosomal protein uS12 family. As to quaternary structure, part of the 30S ribosomal subunit. Contacts proteins S8 and S17. May interact with IF1 in the 30S initiation complex.

Its function is as follows. With S4 and S5 plays an important role in translational accuracy. Interacts with and stabilizes bases of the 16S rRNA that are involved in tRNA selection in the A site and with the mRNA backbone. Located at the interface of the 30S and 50S subunits, it traverses the body of the 30S subunit contacting proteins on the other side and probably holding the rRNA structure together. The combined cluster of proteins S8, S12 and S17 appears to hold together the shoulder and platform of the 30S subunit. The protein is Small ribosomal subunit protein uS12 of Pseudomonas putida (strain GB-1).